We begin with the raw amino-acid sequence, 332 residues long: Biotin synthase (332 aa).

The Radical SAM core domain occupies 53-282 (HFGKKVKLNM…TKEIRISGGR (230 aa)). [4Fe-4S] cluster contacts are provided by Cys71, Cys75, and Cys78. Residues Cys115, Cys147, Cys207, and Arg277 each coordinate [2Fe-2S] cluster.

The protein belongs to the radical SAM superfamily. Biotin synthase family. As to quaternary structure, homodimer. [4Fe-4S] cluster is required as a cofactor. [2Fe-2S] cluster serves as cofactor.

It catalyses the reaction (4R,5S)-dethiobiotin + (sulfur carrier)-SH + 2 reduced [2Fe-2S]-[ferredoxin] + 2 S-adenosyl-L-methionine = (sulfur carrier)-H + biotin + 2 5'-deoxyadenosine + 2 L-methionine + 2 oxidized [2Fe-2S]-[ferredoxin]. It participates in cofactor biosynthesis; biotin biosynthesis; biotin from 7,8-diaminononanoate: step 2/2. Catalyzes the conversion of dethiobiotin (DTB) to biotin by the insertion of a sulfur atom into dethiobiotin via a radical-based mechanism. This Bacillus cereus (strain B4264) protein is Biotin synthase.